Here is a 177-residue protein sequence, read N- to C-terminus: ATP-dependent protease subunit HslV (177 aa).

Residue Thr6 is part of the active site. The Na(+) site is built by Gly161, Cys164, and Thr167.

The protein belongs to the peptidase T1B family. HslV subfamily. A double ring-shaped homohexamer of HslV is capped on each side by a ring-shaped HslU homohexamer. The assembly of the HslU/HslV complex is dependent on binding of ATP.

The protein resides in the cytoplasm. It carries out the reaction ATP-dependent cleavage of peptide bonds with broad specificity.. Its activity is regulated as follows. Allosterically activated by HslU binding. In terms of biological role, protease subunit of a proteasome-like degradation complex believed to be a general protein degrading machinery. This is ATP-dependent protease subunit HslV from Petrotoga mobilis (strain DSM 10674 / SJ95).